The sequence spans 162 residues: Lipoprotein signal peptidase (162 aa).

The next 4 helical transmembrane spans lie at leucine 9–threonine 29, valine 39–phenylalanine 59, valine 66–tyrosine 86, and valine 95–phenylalanine 115. Residues aspartate 122 and aspartate 140 contribute to the active site. A helical transmembrane segment spans residues phenylalanine 136–phenylalanine 156.

The protein belongs to the peptidase A8 family.

It is found in the cell inner membrane. It catalyses the reaction Release of signal peptides from bacterial membrane prolipoproteins. Hydrolyzes -Xaa-Yaa-Zaa-|-(S,diacylglyceryl)Cys-, in which Xaa is hydrophobic (preferably Leu), and Yaa (Ala or Ser) and Zaa (Gly or Ala) have small, neutral side chains.. The protein operates within protein modification; lipoprotein biosynthesis (signal peptide cleavage). In terms of biological role, this protein specifically catalyzes the removal of signal peptides from prolipoproteins. The polypeptide is Lipoprotein signal peptidase (Desulforapulum autotrophicum (strain ATCC 43914 / DSM 3382 / VKM B-1955 / HRM2) (Desulfobacterium autotrophicum)).